The sequence spans 775 residues: Aconitate hydratase, mitochondrial (775 aa).

Residues 1–25 constitute a mitochondrion transit peptide; that stretch reads MLTTLARASAMLLGARGFASAADLD. Substrate is bound by residues Gln-95 and 188–190; that span reads DSH. Residue Asn-337 is glycosylated (N-linked (GlcNAc...) asparagine). Cys-381 contributes to the [4Fe-4S] cluster binding site. N-linked (GlcNAc...) asparagine glycosylation is present at Asn-383. Positions 444 and 447 each coordinate [4Fe-4S] cluster. Substrate is bound at residue Arg-470. A glycan (N-linked (GlcNAc...) asparagine) is linked at Asn-471. Residues Arg-475 and Arg-603 each coordinate substrate. A glycan (N-linked (GlcNAc...) asparagine) is linked at Asn-608. 666–667 lines the substrate pocket; it reads SR. Residues Asn-754 and Asn-763 are each glycosylated (N-linked (GlcNAc...) asparagine).

Belongs to the aconitase/IPM isomerase family. Monomer. The cofactor is [4Fe-4S] cluster.

It localises to the mitochondrion. The catalysed reaction is citrate = D-threo-isocitrate. The protein operates within carbohydrate metabolism; tricarboxylic acid cycle; isocitrate from oxaloacetate: step 2/2. In terms of biological role, catalyzes the isomerization of citrate to isocitrate via cis-aconitate. The protein is Aconitate hydratase, mitochondrial of Arthroderma benhamiae (strain ATCC MYA-4681 / CBS 112371) (Trichophyton mentagrophytes).